Here is a 387-residue protein sequence, read N- to C-terminus: Muscleblind-like protein 1 (387 aa).

Thr6 bears the Phosphothreonine mark. 4 consecutive C3H1-type zinc fingers follow at residues Trp13–Lys41, Asn47–Pro73, Thr178–Asp206, and Asp214–Ala240.

This sequence belongs to the muscleblind family. As to quaternary structure, interacts with DDX1 and YBX1. Interacts with HNRNPH1; the interaction in RNA-independent. Interacts with RBPMS; the interaction allows cooperative assembly of RNA-bound stable cell-specific alternative splicing regulatory complexes.

It localises to the nucleus. The protein resides in the cytoplasm. The protein localises to the cytoplasmic granule. Its function is as follows. Mediates pre-mRNA alternative splicing regulation. Acts either as activator or repressor of splicing on specific pre-mRNA targets. Inhibits cardiac troponin-T (TNNT2) pre-mRNA exon inclusion but induces insulin receptor (IR) pre-mRNA exon inclusion in muscle. Antagonizes the alternative splicing activity pattern of CELF proteins. Regulates the TNNT2 exon 5 skipping through competition with U2AF2. Inhibits the formation of the spliceosome A complex on intron 4 of TNNT2 pre-mRNA. Binds to the stem-loop structure within the polypyrimidine tract of TNNT2 intron 4 during spliceosome assembly. Binds to the 5'-YGCU(U/G)Y-3'consensus sequence. Binds to the IR RNA. Binds to expanded CUG repeat RNA, which folds into a hairpin structure containing GC base pairs and bulged, unpaired U residues. Together with RNA binding proteins RBPMS and RBFOX2, activates vascular smooth muscle cells alternative splicing events. Regulates NCOR2 alternative splicing. This chain is Muscleblind-like protein 1, found in Rattus norvegicus (Rat).